The primary structure comprises 120 residues: Small ribosomal subunit protein uS17 (120 aa).

Residues 1-22 show a composition bias toward low complexity; it reads MMAEAKTGAKATKSAAAGAADG. The disordered stretch occupies residues 1-46; that stretch reads MMAEAKTGAKATKSAAAGAADGASKEKGPKHTPSPPKPSGRRKTRI.

The protein belongs to the universal ribosomal protein uS17 family. In terms of assembly, part of the 30S ribosomal subunit.

In terms of biological role, one of the primary rRNA binding proteins, it binds specifically to the 5'-end of 16S ribosomal RNA. This is Small ribosomal subunit protein uS17 from Mycobacterium ulcerans (strain Agy99).